The following is a 124-amino-acid chain: Non-structural protein 2 (124 aa).

Positions 121 to 124 (DLNP) match the DLNP; interaction with MAP1B motif.

Belongs to the pneumovirus non-structural protein 2 family. As to quaternary structure, monomer (instable). Homomultimer. Heteromultimer with NS1. Interacts with host RIGI (via N-terminus); this interaction prevents host signaling pathway involved in interferon production. Interacts with host MAP1B/microtubule-associated protein 1B.

The protein localises to the host mitochondrion. Plays a major role in antagonizing the type I IFN-mediated antiviral response. Acts cooperatively with NS1 to repress activation and nuclear translocation of host IFN-regulatory factor IRF3. Interacts with the host cytoplasmic sensor of viral nucleic acids RIGI and prevents the interaction with its downstream partner MAVS. Together with NS2, participates in the proteasomal degradation of host STAT2, IRF3, IRF7, TBK1 and RIGI through a NS-degradasome involving CUL2 and Elongin-C. The degradasome requires an intact mitochondrial MAVS. Induces host SOCS1 expression. Induces activation of NF-kappa-B. Suppresses premature apoptosis by an NF-kappa-B-dependent, interferon-independent mechanism promoting continued viral replication. The sequence is that of Non-structural protein 2 (1B) from Homo sapiens (Human).